Reading from the N-terminus, the 288-residue chain is Aminoglycoside 6-adenylyltransferase (288 aa).

It catalyses the reaction streptomycin + ATP = 6-O-adenylylstreptomycin + diphosphate. Functionally, mediates bacterial resistance to streptomycin, is probably a streptomycin 6-adenylyltransferase. This chain is Aminoglycoside 6-adenylyltransferase, found in Campylobacter jejuni.